The chain runs to 624 residues: MAENGEEKLLAVARHIAKTLGHNESMADDILQIFSNFDGRFSREKLAEGQAGEDGSGVATLERALNSIDGQISRFVAADQPIWADPADSAAFLDTIDELVAIIREWSPMASEKPIGICLTRADDMMQQAMFRIEEEFRSLMERGAESFGLNPQGDAGAMNHRFDSEEEEDDDRDFNNGDDIQIPVAQPLTDYDLIIDALPSATINDLHEMAKRMLGAGFGKACSHVYSSCRREFLEESMSRLGLQKLSIEEVHKMPWQELEDEIDRWIKAANVALRILFPSERRLCDRVFFGFSSAADLSFMEVCRGSTIQLLNFADAIAIGSRSPERLFKVLDVFETMRDLMPEFESVFSDQFCSVLRNEAVTIWKRLGEAIRGIFMELENLIRRDPAKAAVPGGGLHPITRYVMNYLRAACRSRQTLEQVFEESNGVPSKDSTLLTVQMSWIMELLESNLEVKSKVYKDPALCYVFLMNNGRYIVQKVKDGDLGLLLGDDWIRKHNVKVKQYHMNYQRSSWNKMLGLLKVDNTAAGMNGLGKTMKEKLKQFNIQFDEICKVHSTWVVFDEQLKEELKISLARLLVPAYGSFIGRFQNLGDIGKNADKYIKYGVEDIEARINELFKGTTTGRK.

The interval 148–176 (FGLNPQGDAGAMNHRFDSEEEEDDDRDFN) is disordered.

Belongs to the EXO70 family. Interacts with EXO70B2, SEC5A and EXO84B. Binds to PUB18. Binds directly to B1L at the plasma membrane and in small vesicles. In terms of processing, target of the E3 ubiquitin-protein ligase PUB18 that mediates its ubiquitination and degradation via the 26S proteasome.

Its subcellular location is the cytoplasmic vesicle. The protein resides in the phagosome. The protein localises to the endomembrane system. It localises to the cell membrane. It is found in the vesicle. Component of an exocyst subcomplex specifically involved in autophagy-related, Golgi-independent membrane traffic to the vacuole. Regulates autophagosome formation and autophagy-related Golgi-independent import into the vacuole. Positive regulator of both abscisic acid (ABA)-promoted and mannitol (drought)-promoted stomatal closure. Involved in the regulation of lateral root formation. The chain is Exocyst complex component EXO70B1 from Arabidopsis thaliana (Mouse-ear cress).